A 51-amino-acid chain; its full sequence is Large ribosomal subunit protein eL39 (51 aa).

It belongs to the eukaryotic ribosomal protein eL39 family.

This is Large ribosomal subunit protein eL39 from Methanococcus aeolicus (strain ATCC BAA-1280 / DSM 17508 / OCM 812 / Nankai-3).